A 196-amino-acid polypeptide reads, in one-letter code: Transmembrane protein 126A (196 aa).

Topologically, residues 1–34 (MENHKSNNTKENITIVDISRKINQLPEAERNLLE) are mitochondrial matrix. A helical transmembrane segment spans residues 35–55 (HGSVYVGLNAALCGLIANSLF). The Mitochondrial intermembrane portion of the chain corresponds to 56-57 (RR). The helical transmembrane segment at 58–78 (ILNVTKARIAAGLPMAWIPFL) threads the bilayer. Over 79-107 (TTDITYRCFVSFPLNTGDLDCETCTITRS) the chain is Mitochondrial matrix. The helical transmembrane segment at 108-128 (GLIGLVIGGLYPVFLAIPVNG) threads the bilayer. Residues 129-159 (GLAARYQSALLPHKGNILSYWIRTSKPVFRK) are Mitochondrial intermembrane-facing. Residues 160–176 (MLFPIMLQTMFSAYLGS) traverse the membrane as a helical segment. Residues 177–196 (EQYKLLIKALQLSEPGKEIH) lie on the Mitochondrial matrix side of the membrane.

This sequence belongs to the TMEM126 family. As to quaternary structure, interacts with OXA1L; promoting cotranslational quality control in mitochondria.

The protein resides in the mitochondrion inner membrane. In terms of biological role, protein required for the cotranslational protein quality control in the inner membrane of the mitochondria. Associates with newly synthesized polypeptides and may act as a chaperone that cooperates with OXA1L for the insertion of newly synthesized mitochondrial proteins into the inner membrane. Required for the assembly of the ND4 module of mitochondrial complex I. The protein is Transmembrane protein 126A (TMEM126A) of Pongo abelii (Sumatran orangutan).